The chain runs to 393 residues: S-adenosylmethionine synthase 1 (393 aa).

Glu-9 serves as a coordination point for Mg(2+). ATP is bound at residue His-15. Position 43 (Glu-43) interacts with K(+). The L-methionine site is built by Glu-56 and Gln-99. ATP is bound by residues 167 to 169 (DGK), 235 to 238 (SGRF), Asp-246, 252 to 253 (RK), Ala-269, Lys-273, and Lys-277. Asp-246 contributes to the L-methionine binding site. Lys-277 contacts L-methionine.

The protein belongs to the AdoMet synthase family. In terms of assembly, homotetramer. It depends on Mn(2+) as a cofactor. Mg(2+) serves as cofactor. The cofactor is Co(2+). Requires K(+) as cofactor. NH4(+) is required as a cofactor. Mostly expressed in roots, and, to a lower extent, in hypocotyls and cotyledons.

The protein localises to the cytoplasm. The catalysed reaction is L-methionine + ATP + H2O = S-adenosyl-L-methionine + phosphate + diphosphate. It participates in amino-acid biosynthesis; S-adenosyl-L-methionine biosynthesis; S-adenosyl-L-methionine from L-methionine: step 1/1. Inhibited by products of SAMS reaction (SAM, Pi, PPi), substrate analogs (cycloleucine and ethionine), and alternative nucleotides (GTP, CTP and ADP). Strongly repressed by PPPi. In terms of biological role, catalyzes the formation of S-adenosylmethionine from methionine and ATP. The reaction comprises two steps that are both catalyzed by the same enzyme: formation of S-adenosylmethionine (AdoMet) and triphosphate, and subsequent hydrolysis of the triphosphate. This Catharanthus roseus (Madagascar periwinkle) protein is S-adenosylmethionine synthase 1 (SAMS1).